A 33-amino-acid chain; its full sequence is Glutaminase-asparaginase (33 aa).

An Asparaginase/glutaminase domain is found at 1–33; sequence NVVVLATGGTIAGAGTNAFASQXGPLGMVVEGK. The Acyl-ester intermediate role is filled by Thr10.

It belongs to the asparaginase 1 family. As to quaternary structure, homotetramer.

The protein resides in the periplasm. It catalyses the reaction L-glutamine + H2O = L-glutamate + NH4(+). The enzyme catalyses L-asparagine + H2O = L-aspartate + NH4(+). The chain is Glutaminase-asparaginase (ansB) from Delftia acidovorans (Pseudomonas acidovorans).